A 725-amino-acid polypeptide reads, in one-letter code: Beta-adducin (725 aa).

A disordered region spans residues 1-22 (MSEDTVPEAASPPPSQGQHYFD). A phosphoserine mark is found at Ser11 and Ser25. Thr55 carries the post-translational modification Phosphothreonine. Phosphoserine is present on residues Ser60 and Ser344. Positions 425-444 (KQQKEKTRWLNTPNTYLRVN) are interaction with calmodulin. Positions 525-725 (AEKSRSPSTE…KSKKKEKVES (201 aa)) are disordered. Phosphoserine occurs at positions 530 and 532. Thr533 carries the post-translational modification Phosphothreonine. Ser535 carries the post-translational modification Phosphoserine. Thr561 carries the post-translational modification Phosphothreonine. Residues 566–588 (EEYKKEVERKKLEQEQEGEKDAA) are compositionally biased toward basic and acidic residues. Phosphoserine occurs at positions 594, 598, 602, and 606. The segment covering 596–621 (VKSTPASPVQSPTRAGTKSPAVSPSK) has biased composition (polar residues). Thr612 carries the phosphothreonine modification. 3 positions are modified to phosphoserine: Ser614, Ser618, and Ser620. 2 stretches are compositionally biased toward basic and acidic residues: residues 622–631 (ASEDAKKTEV) and 639–654 (EPEK…KEEE). Thr674 is subject to Phosphothreonine. A phosphoserine mark is found at Ser678, Ser685, Ser688, Ser692, Ser696, Ser698, Ser700, Ser702, and Ser712. Low complexity predominate over residues 687-700 (TSGPLSPEGSPSKS). Basic residues predominate over residues 701 to 725 (PSKKKKKFRTPSFLKKSKKKEKVES). An interaction with calmodulin region spans residues 703 to 720 (KKKKKFRTPSFLKKSKKK).

This sequence belongs to the aldolase class II family. Adducin subfamily. Heterodimer of an alpha and a beta subunit. Found in a complex with ADD2, DMTN and SLC2A1. Interacts with SLC2A1. As to expression, found in liver, kidney, spleen, heart and brain.

The protein localises to the cytoplasm. It localises to the cytoskeleton. It is found in the cell membrane. In terms of biological role, membrane-cytoskeleton-associated protein that promotes the assembly of the spectrin-actin network. Binds to the erythrocyte membrane receptor SLC2A1/GLUT1 and may therefore provide a link between the spectrin cytoskeleton to the plasma membrane. Binds to calmodulin. Calmodulin binds preferentially to the beta subunit. This is Beta-adducin (Add2) from Rattus norvegicus (Rat).